The sequence spans 704 residues: Polyribonucleotide nucleotidyltransferase (704 aa).

The Mg(2+) site is built by Asp487 and Asp493. In terms of domain architecture, KH spans 554–613 (PRLLTIKIHPDKIREVIGKGGSTIQAITKETGTQIDIQDDGTIIIASVNAIAAQAAKSRI). The 69-residue stretch at 623–691 (GRIYEGKVAK…KQGRIRLSIK (69 aa)) folds into the S1 motif domain.

Belongs to the polyribonucleotide nucleotidyltransferase family. In terms of assembly, component of the RNA degradosome, which is a multiprotein complex involved in RNA processing and mRNA degradation. The cofactor is Mg(2+).

Its subcellular location is the cytoplasm. It carries out the reaction RNA(n+1) + phosphate = RNA(n) + a ribonucleoside 5'-diphosphate. Functionally, involved in mRNA degradation. Catalyzes the phosphorolysis of single-stranded polyribonucleotides processively in the 3'- to 5'-direction. The chain is Polyribonucleotide nucleotidyltransferase from Xanthomonas campestris pv. campestris (strain 8004).